Consider the following 616-residue polypeptide: Glutamine--fructose-6-phosphate aminotransferase [isomerizing] (616 aa).

C2 acts as the Nucleophile; for GATase activity in catalysis. Positions 2-221 (CGIVGYVGTD…QDQIVTITPE (220 aa)) constitute a Glutamine amidotransferase type-2 domain. 2 consecutive SIS domains span residues 288 to 428 (LGDE…VRGT) and 461 to 606 (LAHW…VDQP). K611 acts as the For Fru-6P isomerization activity in catalysis.

As to quaternary structure, homodimer.

Its subcellular location is the cytoplasm. It catalyses the reaction D-fructose 6-phosphate + L-glutamine = D-glucosamine 6-phosphate + L-glutamate. Its function is as follows. Catalyzes the first step in hexosamine metabolism, converting fructose-6P into glucosamine-6P using glutamine as a nitrogen source. This chain is Glutamine--fructose-6-phosphate aminotransferase [isomerizing], found in Leifsonia xyli subsp. xyli (strain CTCB07).